The sequence spans 105 residues: Large ribosomal subunit protein uL24 (105 aa).

Belongs to the universal ribosomal protein uL24 family. In terms of assembly, part of the 50S ribosomal subunit.

In terms of biological role, one of two assembly initiator proteins, it binds directly to the 5'-end of the 23S rRNA, where it nucleates assembly of the 50S subunit. One of the proteins that surrounds the polypeptide exit tunnel on the outside of the subunit. The sequence is that of Large ribosomal subunit protein uL24 from Psychrobacter sp. (strain PRwf-1).